A 453-amino-acid chain; its full sequence is Aldehyde dehydrogenase, dimeric NADP-preferring (453 aa).

Ser-2 carries the post-translational modification N-acetylserine. The residue at position 178 (Lys-178) is an N6-acetyllysine. 188 to 193 serves as a coordination point for NAD(+); sequence GSTGVG. Lys-194 carries the post-translational modification N6-acetyllysine. Catalysis depends on residues Glu-210 and Cys-244.

It belongs to the aldehyde dehydrogenase family. As to quaternary structure, homodimer. As to expression, high levels in stomach, esophagus and lung; low level in the liver and kidney.

It is found in the cytoplasm. The enzyme catalyses an aldehyde + NAD(+) + H2O = a carboxylate + NADH + 2 H(+). It catalyses the reaction octanal + NAD(+) + H2O = octanoate + NADH + 2 H(+). Functionally, ALDHs play a major role in the detoxification of alcohol-derived acetaldehyde. They are involved in the metabolism of corticosteroids, biogenic amines, neurotransmitters, and lipid peroxidation. Oxidizes medium and long chain aldehydes into non-toxic fatty acids. Preferentially oxidizes aromatic aldehyde substrates. Comprises about 50 percent of corneal epithelial soluble proteins. May play a role in preventing corneal damage caused by ultraviolet light. This Homo sapiens (Human) protein is Aldehyde dehydrogenase, dimeric NADP-preferring (ALDH3A1).